A 242-amino-acid chain; its full sequence is Ribonuclease PH (242 aa).

Residues arginine 87 and 125–127 contribute to the phosphate site; that span reads STR.

Belongs to the RNase PH family. In terms of assembly, homohexameric ring arranged as a trimer of dimers.

The catalysed reaction is tRNA(n+1) + phosphate = tRNA(n) + a ribonucleoside 5'-diphosphate. In terms of biological role, phosphorolytic 3'-5' exoribonuclease that plays an important role in tRNA 3'-end maturation. Removes nucleotide residues following the 3'-CCA terminus of tRNAs; can also add nucleotides to the ends of RNA molecules by using nucleoside diphosphates as substrates, but this may not be physiologically important. Probably plays a role in initiation of 16S rRNA degradation (leading to ribosome degradation) during starvation. The chain is Ribonuclease PH from Synechococcus sp. (strain JA-3-3Ab) (Cyanobacteria bacterium Yellowstone A-Prime).